A 117-amino-acid polypeptide reads, in one-letter code: NADH-ubiquinone oxidoreductase chain 3 (117 aa).

Transmembrane regions (helical) follow at residues 1-21 (MKFI…LLLL), 58-78 (FLMT…LPII), and 86-106 (TMIS…TLIL).

The protein belongs to the complex I subunit 3 family.

It is found in the mitochondrion membrane. The catalysed reaction is a ubiquinone + NADH + 5 H(+)(in) = a ubiquinol + NAD(+) + 4 H(+)(out). In terms of biological role, core subunit of the mitochondrial membrane respiratory chain NADH dehydrogenase (Complex I) that is believed to belong to the minimal assembly required for catalysis. Complex I functions in the transfer of electrons from NADH to the respiratory chain. The immediate electron acceptor for the enzyme is believed to be ubiquinone. The chain is NADH-ubiquinone oxidoreductase chain 3 (ND3) from Apis mellifera ligustica (Common honeybee).